A 465-amino-acid polypeptide reads, in one-letter code: Ribulose bisphosphate carboxylase large chain (465 aa).

Lysine 4 bears the N6,N6,N6-trimethyllysine mark. Substrate contacts are provided by asparagine 113 and threonine 163. Lysine 165 serves as the catalytic Proton acceptor. Lysine 167 is a binding site for substrate. Lysine 191, aspartate 193, and glutamate 194 together coordinate Mg(2+). Lysine 191 is subject to N6-carboxylysine. Histidine 284 functions as the Proton acceptor in the catalytic mechanism. Substrate contacts are provided by arginine 285, histidine 317, and serine 369.

It belongs to the RuBisCO large chain family. Type I subfamily. As to quaternary structure, heterohexadecamer of 8 large chains and 8 small chains; disulfide-linked. The disulfide link is formed within the large subunit homodimers. Mg(2+) serves as cofactor. The disulfide bond which can form in the large chain dimeric partners within the hexadecamer appears to be associated with oxidative stress and protein turnover.

It is found in the plastid. The protein resides in the chloroplast. The enzyme catalyses 2 (2R)-3-phosphoglycerate + 2 H(+) = D-ribulose 1,5-bisphosphate + CO2 + H2O. The catalysed reaction is D-ribulose 1,5-bisphosphate + O2 = 2-phosphoglycolate + (2R)-3-phosphoglycerate + 2 H(+). RuBisCO catalyzes two reactions: the carboxylation of D-ribulose 1,5-bisphosphate, the primary event in carbon dioxide fixation, as well as the oxidative fragmentation of the pentose substrate in the photorespiration process. Both reactions occur simultaneously and in competition at the same active site. This chain is Ribulose bisphosphate carboxylase large chain, found in Nepenthes alata (Winged pitcher plant).